We begin with the raw amino-acid sequence, 394 residues long: Protein maelstrom (394 aa).

The segment at residues 2-69 (APKKQNGFMM…ARRDKRGSLN (68 aa)) is a DNA-binding region (HMG box). A disordered region spans residues 44-93 (TQQRGPYNSDAKDANAARRDKRGSLNGHGQVDKAQREAAESLMDKAQREA). Residues 73–93 (QVDKAQREAAESLMDKAQREA) are compositionally biased toward basic and acidic residues.

Belongs to the maelstrom family.

The protein resides in the cytoplasm. It localises to the nucleus. In terms of biological role, involved both in the piRNA and miRNA metabolic processes. As a component of the meiotic nuage, plays a central role during oogenesis by repressing transposable elements and preventing their mobilization, which is essential for the germline integrity. Repression of transposable elements is mediated via the piRNA metabolic process, which mediates the repression of transposable elements during meiosis by forming complexes composed of piRNAs and Piwi proteins and governs the repression of transposons. As a nuclear component, it is required for proper differentiation in the germline stem cell (GSC) lineage by repressing microRNA-7 (miR-7), thereby acting as an indirect regulator of bag-of-marbles (Bam). Acts by binding to the promoter of miR-7 gene and repressing its expression; miR-7 repression alleviates the Bam repression by miR-7, thereby allowing differentiation in the germline stem cell (GSC) lineage. The chain is Protein maelstrom (mael) from Drosophila simulans (Fruit fly).